The primary structure comprises 72 residues: Large ribosomal subunit protein eL40 (72 aa).

Belongs to the eukaryotic ribosomal protein eL40 family.

This chain is Large ribosomal subunit protein eL40, found in Nicotiana tabacum (Common tobacco).